Reading from the N-terminus, the 310-residue chain is Malate dehydrogenase (310 aa).

NAD(+) is bound by residues 7 to 12 (GAGNVG) and Asp-32. 2 residues coordinate substrate: Arg-81 and Arg-87. NAD(+) is bound by residues Asn-94 and 117-119 (VSN). The substrate site is built by Asn-119 and Arg-150. His-174 acts as the Proton acceptor in catalysis.

The protein belongs to the LDH/MDH superfamily. MDH type 3 family.

The catalysed reaction is (S)-malate + NAD(+) = oxaloacetate + NADH + H(+). Its function is as follows. Catalyzes the reversible oxidation of malate to oxaloacetate. The polypeptide is Malate dehydrogenase (Chlorobium chlorochromatii (strain CaD3)).